Consider the following 131-residue polypeptide: Protein SOB FIVE-LIKE 4 (131 aa).

2 disordered regions span residues 1–21 (MDKE…SSPI) and 40–131 (IYNY…YRMK). The span at 8 to 18 (SSESGWTTYLS) shows a compositional bias: polar residues. The SOFL-A signature appears at 11 to 16 (SGWTTY). Residues 46-58 (KVEHEEERNKDSD) show a composition bias toward basic and acidic residues. The SOFL-B signature appears at 60–69 (SMASDASSGP). Basic and acidic residues predominate over residues 79 to 109 (KALDLKNGKNEGNSKSKNDDDHHNHYHDGKK). The Nuclear localization signal motif lies at 107 to 114 (GKKTSNSY). Residues 114–131 (YRKKDKKKRENKSTYRMK) are compositionally biased toward basic residues.

This sequence belongs to the SOFL plant protein family. As to expression, expressed, at low levels, in seedlings, roots, flowers and siliques.

The protein resides in the cytoplasm. The protein localises to the nucleus. In terms of biological role, involved in cytokinin-mediated development. The sequence is that of Protein SOB FIVE-LIKE 4 from Arabidopsis thaliana (Mouse-ear cress).